The chain runs to 461 residues: MAGLSRILLSCTLACLLAGQAAQASVDDPTRAGGDNRVRALRADQARRDVLLTACRDDPGHRRGEPDCVNAERAQALQQWQAAAMTSVDAAFSDLAGALRNAAPRRMEAAIVRLTRQLQPLVYSMMTLLVLLTGYALLARRDRPFEWHIRHALLVAVVTSLALSPDRYLSTVVAGVQDVAGWLSGPWTAPDGAAGRGGLAQLDQFAAQAQAWVAQLAGQAANDANPGSAVNWLLCAMIVAASAGGWLCLAASLLIVPGLIVTLLLSLGPLFLVLLLFPALQRWTNAWLGALVRALVFMALGTPAVGLLSDVLAGALPAGLPQRFATDPLRSTMLAATLCATATLMLLTLVPLASSVNAGLRRRLWPNAAHPGLAQAHRQAAARQYAPRPAAAAAAAGPHQAGTYAASATPAPARPAPSFPAHAYRQYALGGARRPPPRVRRDDRPAPAPDRRVLPRKPNLP.

The signal sequence occupies residues 1–24 (MAGLSRILLSCTLACLLAGQAAQA). A run of 5 helical transmembrane segments spans residues 118–138 (LQPL…YALL), 232–252 (WLLC…LAAS), 253–273 (LLIV…LFLV), 294–314 (ALVF…VLAG), and 333–353 (MLAA…VPLA). Residues 376 to 411 (AHRQAAARQYAPRPAAAAAAAGPHQAGTYAASATPA) are compositionally biased toward low complexity. The segment at 376–461 (AHRQAAARQY…RVLPRKPNLP (86 aa)) is disordered. Residues 439 to 453 (VRRDDRPAPAPDRRV) are compositionally biased toward basic and acidic residues.

It is found in the cell membrane. In Bordetella bronchiseptica (strain ATCC BAA-588 / NCTC 13252 / RB50) (Alcaligenes bronchisepticus), this protein is Type IV secretion system protein PtlD homolog (ptlD).